The primary structure comprises 201 residues: Urease accessory protein UreG (201 aa).

Residue 11 to 18 participates in GTP binding; the sequence is GPVGSGKT.

It belongs to the SIMIBI class G3E GTPase family. UreG subfamily. Homodimer. UreD, UreF and UreG form a complex that acts as a GTP-hydrolysis-dependent molecular chaperone, activating the urease apoprotein by helping to assemble the nickel containing metallocenter of UreC. The UreE protein probably delivers the nickel.

It localises to the cytoplasm. Facilitates the functional incorporation of the urease nickel metallocenter. This process requires GTP hydrolysis, probably effectuated by UreG. This Prochlorococcus marinus subsp. pastoris (strain CCMP1986 / NIES-2087 / MED4) protein is Urease accessory protein UreG.